Reading from the N-terminus, the 523-residue chain is MTATAGSNKRAIRRALVSVYDKTGLEDLARGLHEAGVELVSTGSTAGRIAAAGVPVTKVEELTGFPECLDGRVKTLHPKVHAGILADLRLESHRQQLDELGVAPFDLVVVNLYPFRETVASGATPDECVEQIDIGGPSMVRAAAKNHPSVAVVTSPARYADVLLAVEGGGFDLAARKRLAAEAFQHTAAYDVAVASWFAAEYAPVDESGFPDFLGATYERANTLRYGENPHQPAALYTSPEGGGLAQAEQLHGKEMSYNNYTDTDAARRAAYDHAEPCVAIIKHANPCGIAIGADVAEAHRKAHDCDPVSAYGGVIAVNRPVSKEMAERVAGIFTEVIVAPDYEDGALEALTKKKNIRVLRAPAAPAAPVEVKPIDGGALLQVTDRLQAEGDDPATWTLATGEALSEAELAELAFAWRACRAVKSNAILLAKDGASVGVGMGQVNRVDSAKLAVERAGAERAQGAYAASDAFFPFPDGLEILTGAGVKAVVQPGGSVRDELVVEAAKKAGVTMYFTGTRHFFH.

Positions 1-154 constitute an MGS-like domain; sequence MTATAGSNKR…KNHPSVAVVT (154 aa).

The protein belongs to the PurH family.

The catalysed reaction is (6R)-10-formyltetrahydrofolate + 5-amino-1-(5-phospho-beta-D-ribosyl)imidazole-4-carboxamide = 5-formamido-1-(5-phospho-D-ribosyl)imidazole-4-carboxamide + (6S)-5,6,7,8-tetrahydrofolate. The enzyme catalyses IMP + H2O = 5-formamido-1-(5-phospho-D-ribosyl)imidazole-4-carboxamide. The protein operates within purine metabolism; IMP biosynthesis via de novo pathway; 5-formamido-1-(5-phospho-D-ribosyl)imidazole-4-carboxamide from 5-amino-1-(5-phospho-D-ribosyl)imidazole-4-carboxamide (10-formyl THF route): step 1/1. It functions in the pathway purine metabolism; IMP biosynthesis via de novo pathway; IMP from 5-formamido-1-(5-phospho-D-ribosyl)imidazole-4-carboxamide: step 1/1. The sequence is that of Bifunctional purine biosynthesis protein PurH from Streptomyces coelicolor (strain ATCC BAA-471 / A3(2) / M145).